Here is a 1482-residue protein sequence, read N- to C-terminus: Glutamate receptor ionotropic, NMDA 2B (1482 aa).

The N-terminal stretch at 1-26 is a signal peptide; sequence MKPSAECCSPKFWLVLAVLAVSGSKA. Over 27 to 557 the chain is Extracellular; sequence RSQKSAPSIG…SAFLEPFSAD (531 aa). An N-linked (GlcNAc...) asparagine glycan is attached at Asn-74. Cys-86 and Cys-321 are joined by a disulfide. 2 residues coordinate Zn(2+): His-127 and Glu-284. N-linked (GlcNAc...) asparagine glycosylation is found at Asn-341, Asn-348, Asn-444, and Asn-491. Disulfide bonds link Cys-429/Cys-456 and Cys-436/Cys-457. Residues Thr-514 and Arg-519 each contribute to the L-glutamate site. A glycan (N-linked (GlcNAc...) asparagine) is linked at Asn-542. Residues 558-576 form a helical membrane-spanning segment; the sequence is VWVMMFVMLLIVSAVAVFV. At 577–603 the chain is on the cytoplasmic side; the sequence is FEYFSPVGYNRCLADGREPGGPSFTIG. An intramembrane region (discontinuously helical) is located at residues 604–623; the sequence is KAIWLLWGLVFNNSVPVQNP. Positions 604–623 are pore-forming; it reads KAIWLLWGLVFNNSVPVQNP. At 624–630 the chain is on the cytoplasmic side; that stretch reads KGTTSKI. The helical transmembrane segment at 631-646 threads the bilayer; that stretch reads MVSVWAFFAVIFLASY. Residues 647-817 lie on the Extracellular side of the membrane; that stretch reads TANLAAFMIQ…VMSSQLDIDN (171 aa). A glycan (N-linked (GlcNAc...) asparagine) is linked at Asn-688. L-glutamate contacts are provided by residues 690–691 and Asp-732; that span reads ST. A disulfide bridge connects residues Cys-746 and Cys-801. Residues 818-837 form a helical membrane-spanning segment; sequence MAGVFYMLGAAMALSLITFI. Residues 838–1482 are Cytoplasmic-facing; sequence CEHLFYWQFR…EKLSSIESDV (645 aa). Ser-882, Ser-886, Ser-917, and Ser-920 each carry phosphoserine. A phosphotyrosine mark is found at Tyr-962 and Tyr-1039. Ser-1058, Ser-1061, and Ser-1064 each carry phosphoserine. Residues 1074-1097 form a disordered region; that stretch reads EGNAAKRRKQQYKDSLKKRPASAK. Phosphotyrosine is present on residues Tyr-1109 and Tyr-1133. Phosphoserine is present on Ser-1143. Position 1155 is a phosphotyrosine (Tyr-1155). The tract at residues 1162–1194 is disordered; that stretch reads FKRDSVSGGGPCTNRSHLKHGTGDKHGVVGGVP. Phosphoserine occurs at positions 1255 and 1259. A compositionally biased stretch (low complexity) spans 1266–1277; the sequence is PAAPVAVSSNAS. Residues 1266–1301 form a disordered region; that stretch reads PAAPVAVSSNASTTKYPQSPTNSKAQKKNRNKLRRQ. Positions 1278–1289 are enriched in polar residues; the sequence is TTKYPQSPTNSK. Positions 1290-1301 are enriched in basic residues; the sequence is AQKKNRNKLRRQ. The interaction with DAPK1 stretch occupies residues 1292-1304; it reads KKNRNKLRRQHSY. At Ser-1303 the chain carries Phosphoserine; by DAPK1. Position 1472 is a phosphotyrosine (Tyr-1472). The PDZ-binding signature appears at 1480–1482; sequence SDV.

The protein belongs to the glutamate-gated ion channel (TC 1.A.10.1) family. NR2B/GRIN2B subfamily. In terms of assembly, heterotetramer. Forms heterotetrameric channels composed of two GluN1/zeta subunits (GRIN1), and two identical GluN2/epsilon subunits (GRIN2A, GRIN2B, GRIN2C or GRIN2D) or GluN3 subunits (GRIN3A or GRIN3B) (in vitro). Can also form heterotetrameric channels that contain at least two GluN1 subunits and at least two different GluN2 subunits (or a combination of one GluN2 and one GluN3 subunits) (in vitro). In vivo, the subunit composition may depend on the expression levels of the different subunits. Found in a complex with GRIN1, GRIN3A and PPP2CB. Interacts with MAGI3. Interacts with HIP1 and NETO1. Interacts with PDZ domains of PATJ, DLG3 and DLG4. Interacts with DAPK1. Found in a complex with GRIN1 and PRR7. Interacts with PRR7. Interacts with CAMK2A. Interacts with ARC; preventing ARC oligomerization. Interacts with TMEM25. Interacts (via the extreme C-terminus) with FRMPD2 (via the second PDZ domain); the interaction is direct and is likely to promote NMDAR-mediated neural signal transmission. GRIN2A binds FRMPD2 with lower affinity than GRIN2B. Interacts with FAM81A; the interaction facilitates condensate formation via liquid-liquid phase separation. Post-translationally, phosphorylated on tyrosine residues. Phosphorylation at Ser-1303 by DAPK1 enhances synaptic NMDA receptor channel activity. As to expression, detected in brain (at protein level). Detected throughout the brain, and in brain stem trigeminal nucleus. Detected in forebrain.

The protein resides in the cell membrane. It localises to the postsynaptic cell membrane. The protein localises to the cell projection. It is found in the dendrite. Its subcellular location is the late endosome. The protein resides in the lysosome. It localises to the cytoplasm. The protein localises to the cytoskeleton. The catalysed reaction is Ca(2+)(in) = Ca(2+)(out). It catalyses the reaction Na(+)(in) = Na(+)(out). It carries out the reaction K(+)(in) = K(+)(out). Its function is as follows. Component of N-methyl-D-aspartate (NMDA) receptors (NMDARs) that function as heterotetrameric, ligand-gated cation channels with high calcium permeability and voltage-dependent block by Mg(2+). Participates in synaptic plasticity for learning and memory formation by contributing to the long-term depression (LTD) of hippocampus membrane currents. Channel activation requires binding of the neurotransmitter L-glutamate to the GluN2 subunit, glycine or D-serine binding to the GluN1 subunit, plus membrane depolarization to eliminate channel inhibition by Mg(2+). NMDARs mediate simultaneously the potasium efflux and the influx of calcium and sodium. Each GluN2 subunit confers differential attributes to channel properties, including activation, deactivation and desensitization kinetics, pH sensitivity, Ca2(+) permeability, and binding to allosteric modulators. In concert with DAPK1 at extrasynaptic sites, acts as a central mediator for stroke damage. Its phosphorylation at Ser-1303 by DAPK1 enhances synaptic NMDA receptor channel activity inducing injurious Ca2+ influx through them, resulting in an irreversible neuronal death. In Mus musculus (Mouse), this protein is Glutamate receptor ionotropic, NMDA 2B.